A 336-amino-acid polypeptide reads, in one-letter code: C2H2 finger domain transcription factor mtfA (336 aa).

The disordered stretch occupies residues 1–245 (MDVASLISPS…PSPGHQQMIS (245 aa)). Polar residues-rich tracts occupy residues 7–29 (ISPS…SSAS) and 36–56 (EQST…YSRT). A compositionally biased stretch (low complexity) spans 136–149 (SPSTSSVSAASSSA). Residues 168–181 (TDRSSISSQGSVQH) show a composition bias toward polar residues. Residues 182 to 210 (AASAPYASPAPSVSSFSSPIEPSTPSTAA) show a composition bias toward low complexity. Polar residues predominate over residues 216-245 (PAPNTFQNPSPFPQTSTASLPSPGHQQMIS). C2H2-type zinc fingers lie at residues 272–294 (YICR…SHSH) and 300–325 (FRCT…RGCH).

It localises to the nucleus. Transcription factor that controls morphogenesis and virulence. Acts as a positive regulator of gliotixin and protease production. In Aspergillus fumigatus (strain CBS 144.89 / FGSC A1163 / CEA10) (Neosartorya fumigata), this protein is C2H2 finger domain transcription factor mtfA.